The sequence spans 420 residues: UDP-N-acetylglucosamine 1-carboxyvinyltransferase (420 aa).

22–23 (KN) contributes to the phosphoenolpyruvate binding site. Position 91 (R91) interacts with UDP-N-acetyl-alpha-D-glucosamine. C115 acts as the Proton donor in catalysis. At C115 the chain carries 2-(S-cysteinyl)pyruvic acid O-phosphothioketal. Residues 120–124 (RPVDL), 160–163 (KVSV), D305, and I327 each bind UDP-N-acetyl-alpha-D-glucosamine.

The protein belongs to the EPSP synthase family. MurA subfamily.

It is found in the cytoplasm. The catalysed reaction is phosphoenolpyruvate + UDP-N-acetyl-alpha-D-glucosamine = UDP-N-acetyl-3-O-(1-carboxyvinyl)-alpha-D-glucosamine + phosphate. It participates in cell wall biogenesis; peptidoglycan biosynthesis. Functionally, cell wall formation. Adds enolpyruvyl to UDP-N-acetylglucosamine. The sequence is that of UDP-N-acetylglucosamine 1-carboxyvinyltransferase from Proteus mirabilis (strain HI4320).